A 536-amino-acid polypeptide reads, in one-letter code: Heat shock factor protein 2 (536 aa).

Glycyl lysine isopeptide (Lys-Gly) (interchain with G-Cter in SUMO2) cross-links involve residues Lys-2 and Lys-82. Residues 7 to 112 mediate DNA binding; the sequence is VPAFLSKLWT…LLENIKRKVS (106 aa). The Nuclear localization signal motif lies at 108–122; sequence KRKVSSSKPEENKIR. The hydrophobic repeat HR-A/B stretch occupies residues 119–192; that stretch reads NKIRQEDLTK…VTLVQNNQLV (74 aa). Residues Lys-135, Lys-139, Lys-151, Lys-210, Lys-218, and Lys-237 each participate in a glycyl lysine isopeptide (Lys-Gly) (interchain with G-Cter in SUMO2) cross-link. The Nuclear localization signal motif lies at 195–210; sequence KRKRPLLLNTNGAQKK. Residues 300–337 are disordered; it reads QSGEQNEPARESLSSGSDGSSPLMSSAVQLNGSSSLTS. Low complexity predominate over residues 311-325; sequence SLSSGSDGSSPLMSS. Residues 326–337 show a composition bias toward polar residues; the sequence is AVQLNGSSSLTS. The hydrophobic repeat HR-C stretch occupies residues 360–385; the sequence is LLDYLDSIDCSLEDFQAMLSGRQFSI. Residues 407–438 are disordered; it reads NNTKSENKGLETTKNNVVQPVSEEGRKSKSKP. Positions 429–438 are enriched in basic and acidic residues; it reads EEGRKSKSKP.

This sequence belongs to the HSF family. DNA-binding homotrimer in stressed or heat shocked cells, otherwise found as a homodimer.

It localises to the cytoplasm. Its subcellular location is the nucleus. Functionally, DNA-binding protein that specifically binds heat shock promoter elements (HSE) and activates transcription. In higher eukaryotes, HSF is unable to bind to the HSE unless the cells are heat shocked. In Homo sapiens (Human), this protein is Heat shock factor protein 2 (HSF2).